The chain runs to 158 residues: Botcinic acid biosynthesis cluster B protein 16 (158 aa).

It participates in polyketide biosynthesis. Its function is as follows. Part of the gene cluster B that mediates the biosynthesis of botcinic acid and its botcinin derivatives, acetate-derived polyketides that contribute to virulence when combined with the sesquiterpene botrydial. Botcinic acid and its derivatives have been shown to induce chlorosis and necrosis during host plant infection, but also have antifungal activities. Two polyketide synthases, BOA6 and BOA9, are involved in the biosynthesis of botcinins. BOA6 mediates the formation of the per-methylated tetraketide core by condensation of four units of malonyl-CoA with one unit of acetyl-CoA, which would be methylated in activated methylene groups to yield a bicyclic acid intermediate that could then either be converted to botrylactone derivatives or lose the starter acetate unit through a retro-Claisen type C-C bond cleavage to yield botcinin derivatives. The second polyketide synthase, BOA9, is probably required for the biosynthesis of the tetraketide side chain of botcinins. The methyltransferase (MT) domain within BOA6 is probably responsible for the incorporation of four methyl groups. The trans-enoyl reductase BOA5 might take over the enoyl reductase function of BOA6 that misses an ER domain. The monooxygenases BOA2, BOA3 and BOA4 might be involved in further hydroxylations at C4, C5 and C8, whereas BOA7, close to BOA9, could potentially be involved in the hydroxylation at C4 in the side chain of botcinins. The polypeptide is Botcinic acid biosynthesis cluster B protein 16 (Botryotinia fuckeliana (strain B05.10) (Noble rot fungus)).